We begin with the raw amino-acid sequence, 880 residues long: Leucine--tRNA ligase (880 aa).

A 'HIGH' region motif is present at residues 46 to 56 (PYPSGALHMGH). The disordered stretch occupies residues 483 to 502 (SPIKTEPTWRQTTCPDCGGP). A 'KMSKS' region motif is present at residues 638–642 (KMSKS). Lysine 641 provides a ligand contact to ATP.

The protein belongs to the class-I aminoacyl-tRNA synthetase family.

It localises to the cytoplasm. It catalyses the reaction tRNA(Leu) + L-leucine + ATP = L-leucyl-tRNA(Leu) + AMP + diphosphate. This is Leucine--tRNA ligase from Xanthomonas oryzae pv. oryzae (strain PXO99A).